We begin with the raw amino-acid sequence, 209 residues long: Regulator of G-protein signaling 1 (209 aa).

The region spanning 85–200 (SLEKLLANQT…LKSDIYLNLL (116 aa)) is the RGS domain.

In terms of assembly, interacts with GNAI1 and GNAQ. As to expression, detected in peripheral blood monocytes. Expression is relatively low in B-cells and chronic lymphocytic leukemia B-cells; however, in other types of malignant B-cell such as non-Hodgkin lymphoma and hairy cell leukemia, expression is constitutively high.

The protein resides in the cell membrane. It is found in the cytoplasm. The protein localises to the cytosol. Functionally, regulates G protein-coupled receptor signaling cascades, including signaling downstream of the N-formylpeptide chemoattractant receptors and leukotriene receptors. Inhibits B cell chemotaxis toward CXCL12. Inhibits signal transduction by increasing the GTPase activity of G protein alpha subunits thereby driving them into their inactive GDP-bound form. In Homo sapiens (Human), this protein is Regulator of G-protein signaling 1 (RGS1).